Reading from the N-terminus, the 417-residue chain is Phosphoglycerate kinase 2 (417 aa).

Ser-2 is modified (N-acetylserine). A phosphoserine mark is found at Ser-2 and Ser-4. Position 11 is an N6-acetyllysine (Lys-11). (2R)-3-phosphoglycerate is bound by residues Val-23, Asp-24, Phe-25, Asn-26, Gln-38, Arg-39, Ser-62, His-63, Gly-65, and Arg-66. N6-acetyllysine occurs at positions 75, 86, and 97. 2 residues coordinate (2R)-3-phosphoglycerate: Leu-122 and Arg-123. N6-acetyllysine is present on residues Lys-131 and Lys-146. The (2R)-3-phosphoglycerate site is built by His-170 and Arg-171. At Tyr-196 the chain carries Phosphotyrosine. At Lys-199 the chain carries N6-acetyllysine. Position 214 (Gly-214) interacts with ADP. Residue Gly-214 coordinates CDP. AMP contacts are provided by Ala-215 and Lys-216. Residue Ala-215 coordinates ATP. Ala-215 serves as a coordination point for Mg(2+). Mg(2+)-binding residues include Ala-218 and Asp-219. Asp-219 serves as a coordination point for CDP. Lys-220 lines the AMP pocket. Lys-220 contributes to the ATP binding site. Gly-238 is a binding site for ADP. Position 238 (Gly-238) interacts with CDP. Gly-239 serves as a coordination point for AMP. Gly-239 is an ATP binding site. N6-acetyllysine is present on residues Lys-267 and Lys-291. Residue Ala-313 participates in AMP binding. ATP is bound at residue Ala-313. The CDP site is built by Gly-338 and Phe-343. An ADP-binding site is contributed by Phe-343. AMP is bound at residue Glu-344. The ATP site is built by Glu-344, Asp-375, and Thr-376. Asp-375 contacts Mg(2+).

It belongs to the phosphoglycerate kinase family. In terms of assembly, monomer. Requires Mg(2+) as cofactor. Testis specific.

Its subcellular location is the cytoplasm. The enzyme catalyses (2R)-3-phosphoglycerate + ATP = (2R)-3-phospho-glyceroyl phosphate + ADP. It functions in the pathway carbohydrate degradation; glycolysis; pyruvate from D-glyceraldehyde 3-phosphate: step 2/5. Essential for sperm motility and male fertility but is not required for the completion of spermatogenesis. The sequence is that of Phosphoglycerate kinase 2 from Sus scrofa (Pig).